A 164-amino-acid chain; its full sequence is MNSRVPATQSWFSSHLPTTEPDLEPATAAEGSTTETATLSPETTSFNDTRIPDVAGGAAGVGTMLLSFGIITVIGLAVAMVLYIRKKKRLEKLRHQLMPMYNFDPTEEQDELEQELLEHGRDAASMQAAASLQVTQGKSTLPSQGPLQRPSRLVFTDVANAIHA.

The segment covering 1–17 has biased composition (polar residues); the sequence is MNSRVPATQSWFSSHLP. Residues 1–48 form a disordered region; the sequence is MNSRVPATQSWFSSHLPTTEPDLEPATAAEGSTTETATLSPETTSFND. A compositionally biased stretch (low complexity) spans 24–45; sequence EPATAAEGSTTETATLSPETTS. The chain crosses the membrane as a helical span at residues 64–84; the sequence is MLLSFGIITVIGLAVAMVLYI. A coiled-coil region spans residues 106–130; that stretch reads TEEQDELEQELLEHGRDAASMQAAA.

It localises to the membrane. This is an uncharacterized protein from Mus musculus (Mouse).